The chain runs to 270 residues: MKMTSKKMKDELMKKLSRPEWDFHYDSEKEVLRIEQKDSKKGINVSLPGVVAKWEVNKEKAIEEVAYYVQEALIAMHKEENSAAKILPVIRSTSFPKQAEEGNPFIMTDHTAETRIYYALDSNKTYRLIDERLLQKLGLTEQQVREMALFNARSLSYEFKQDTVAGNTFYFLNTNDGYDATRILNESLLQSMREKISGDMVVAVPHQDVLIIADIVNEIGYDIIAQMTMKFFAEGHVPITSLSFVYEDGDFEPIFILAKNRKKTDGKEKG.

Belongs to the UPF0354 family.

This is UPF0354 protein BT9727_4425 from Bacillus thuringiensis subsp. konkukian (strain 97-27).